A 344-amino-acid polypeptide reads, in one-letter code: Glycerol-3-phosphate dehydrogenase [NAD(P)+] (344 aa).

NADPH is bound by residues Ser-23, Tyr-24, His-44, and Lys-118. Residues Lys-118, Gly-147, and Thr-149 each coordinate sn-glycerol 3-phosphate. Ala-151 provides a ligand contact to NADPH. Sn-glycerol 3-phosphate-binding residues include Lys-203, Asp-256, Ser-266, Arg-267, and Asn-268. The active-site Proton acceptor is Lys-203. Arg-267 provides a ligand contact to NADPH. Residues Val-291 and Glu-293 each coordinate NADPH.

Belongs to the NAD-dependent glycerol-3-phosphate dehydrogenase family.

The protein localises to the cytoplasm. It carries out the reaction sn-glycerol 3-phosphate + NAD(+) = dihydroxyacetone phosphate + NADH + H(+). The enzyme catalyses sn-glycerol 3-phosphate + NADP(+) = dihydroxyacetone phosphate + NADPH + H(+). It functions in the pathway membrane lipid metabolism; glycerophospholipid metabolism. Catalyzes the reduction of the glycolytic intermediate dihydroxyacetone phosphate (DHAP) to sn-glycerol 3-phosphate (G3P), the key precursor for phospholipid synthesis. The polypeptide is Glycerol-3-phosphate dehydrogenase [NAD(P)+] (Vibrio cholerae serotype O1 (strain ATCC 39541 / Classical Ogawa 395 / O395)).